Here is a 170-residue protein sequence, read N- to C-terminus: Large ribosomal subunit protein uL10 (170 aa).

It belongs to the universal ribosomal protein uL10 family. Part of the ribosomal stalk of the 50S ribosomal subunit. The N-terminus interacts with L11 and the large rRNA to form the base of the stalk. The C-terminus forms an elongated spine to which L12 dimers bind in a sequential fashion forming a multimeric L10(L12)X complex.

Its function is as follows. Forms part of the ribosomal stalk, playing a central role in the interaction of the ribosome with GTP-bound translation factors. In Corynebacterium urealyticum (strain ATCC 43042 / DSM 7109), this protein is Large ribosomal subunit protein uL10.